A 315-amino-acid chain; its full sequence is Adenine deaminase (315 aa).

H14, H16, and H194 together coordinate Zn(2+). Catalysis depends on E197, which acts as the Proton donor. Position 275 (D275) interacts with Zn(2+). D276 is a binding site for substrate.

The protein belongs to the metallo-dependent hydrolases superfamily. Adenosine and AMP deaminases family. Adenine deaminase type 2 subfamily. The cofactor is Zn(2+).

It carries out the reaction adenine + H2O + H(+) = hypoxanthine + NH4(+). In terms of biological role, catalyzes the hydrolytic deamination of adenine to hypoxanthine. Plays an important role in the purine salvage pathway and in nitrogen catabolism. This Ectopseudomonas mendocina (strain ymp) (Pseudomonas mendocina) protein is Adenine deaminase.